Reading from the N-terminus, the 292-residue chain is 2-(5''-triphosphoribosyl)-3'-dephosphocoenzyme-A synthase (292 aa).

This sequence belongs to the CitG/MdcB family.

It carries out the reaction 3'-dephospho-CoA + ATP = 2'-(5''-triphospho-alpha-D-ribosyl)-3'-dephospho-CoA + adenine. In terms of biological role, catalyzes the formation of 2-(5''-triphosphoribosyl)-3'-dephosphocoenzyme-A, the precursor of the prosthetic group of the holo-acyl carrier protein (gamma chain) of citrate lyase, from ATP and dephospho-CoA. The sequence is that of 2-(5''-triphosphoribosyl)-3'-dephosphocoenzyme-A synthase from Escherichia coli O139:H28 (strain E24377A / ETEC).